The primary structure comprises 160 residues: Ribosomal RNA large subunit methyltransferase H (160 aa).

S-adenosyl-L-methionine-binding positions include L78, G109, and 128–133 (LSNLTL).

This sequence belongs to the RNA methyltransferase RlmH family. In terms of assembly, homodimer.

The protein localises to the cytoplasm. The enzyme catalyses pseudouridine(1915) in 23S rRNA + S-adenosyl-L-methionine = N(3)-methylpseudouridine(1915) in 23S rRNA + S-adenosyl-L-homocysteine + H(+). Its function is as follows. Specifically methylates the pseudouridine at position 1915 (m3Psi1915) in 23S rRNA. This chain is Ribosomal RNA large subunit methyltransferase H, found in Alcanivorax borkumensis (strain ATCC 700651 / DSM 11573 / NCIMB 13689 / SK2).